The chain runs to 299 residues: Oxygen-dependent coproporphyrinogen-III oxidase (299 aa).

Ser-92 contributes to the substrate binding site. Positions 96 and 106 each coordinate a divalent metal cation. Residue His-106 is the Proton donor of the active site. Residue 108–110 (NVR) coordinates substrate. Positions 145 and 175 each coordinate a divalent metal cation. The interval 240–275 (YVEFNLVWDRGTLFGLQTGGRTESILMSMPPLVRWE) is important for dimerization. 258–260 (GGR) is a binding site for substrate.

This sequence belongs to the aerobic coproporphyrinogen-III oxidase family. As to quaternary structure, homodimer. It depends on a divalent metal cation as a cofactor.

Its subcellular location is the cytoplasm. The catalysed reaction is coproporphyrinogen III + O2 + 2 H(+) = protoporphyrinogen IX + 2 CO2 + 2 H2O. It participates in porphyrin-containing compound metabolism; protoporphyrin-IX biosynthesis; protoporphyrinogen-IX from coproporphyrinogen-III (O2 route): step 1/1. Functionally, involved in the heme biosynthesis. Catalyzes the aerobic oxidative decarboxylation of propionate groups of rings A and B of coproporphyrinogen-III to yield the vinyl groups in protoporphyrinogen-IX. This Salmonella heidelberg (strain SL476) protein is Oxygen-dependent coproporphyrinogen-III oxidase.